The chain runs to 294 residues: 4-hydroxy-tetrahydrodipicolinate synthase (294 aa).

Thr47 is a pyruvate binding site. Tyr135 serves as the catalytic Proton donor/acceptor. The active-site Schiff-base intermediate with substrate is Lys163. Thr205 provides a ligand contact to pyruvate.

Belongs to the DapA family. In terms of assembly, homotetramer; dimer of dimers.

It is found in the cytoplasm. It catalyses the reaction L-aspartate 4-semialdehyde + pyruvate = (2S,4S)-4-hydroxy-2,3,4,5-tetrahydrodipicolinate + H2O + H(+). Its pathway is amino-acid biosynthesis; L-lysine biosynthesis via DAP pathway; (S)-tetrahydrodipicolinate from L-aspartate: step 3/4. Its function is as follows. Catalyzes the condensation of (S)-aspartate-beta-semialdehyde [(S)-ASA] and pyruvate to 4-hydroxy-tetrahydrodipicolinate (HTPA). This Rickettsia felis (strain ATCC VR-1525 / URRWXCal2) (Rickettsia azadi) protein is 4-hydroxy-tetrahydrodipicolinate synthase.